The following is a 635-amino-acid chain: 1-deoxy-D-xylulose-5-phosphate synthase (635 aa).

Residues His72 and 113–115 each bind thiamine diphosphate; that span reads GHA. Asp144 lines the Mg(2+) pocket. Residues 145–146, Asn174, Tyr286, and Glu369 contribute to the thiamine diphosphate site; that span reads GA. Mg(2+) is bound at residue Asn174.

The protein belongs to the transketolase family. DXPS subfamily. As to quaternary structure, homodimer. Requires Mg(2+) as cofactor. Thiamine diphosphate is required as a cofactor.

It catalyses the reaction D-glyceraldehyde 3-phosphate + pyruvate + H(+) = 1-deoxy-D-xylulose 5-phosphate + CO2. It functions in the pathway metabolic intermediate biosynthesis; 1-deoxy-D-xylulose 5-phosphate biosynthesis; 1-deoxy-D-xylulose 5-phosphate from D-glyceraldehyde 3-phosphate and pyruvate: step 1/1. Functionally, catalyzes the acyloin condensation reaction between C atoms 2 and 3 of pyruvate and glyceraldehyde 3-phosphate to yield 1-deoxy-D-xylulose-5-phosphate (DXP). This Gloeothece citriformis (strain PCC 7424) (Cyanothece sp. (strain PCC 7424)) protein is 1-deoxy-D-xylulose-5-phosphate synthase.